A 640-amino-acid polypeptide reads, in one-letter code: Calpain-5 (640 aa).

The region spanning 26–343 (LFEDPLFPAT…FTDIIKCRLI (318 aa)) is the Calpain catalytic domain. Catalysis depends on residues cysteine 81, histidine 252, and asparagine 284. The tract at residues 344–496 (NTSYLSIHKT…VFTDVPSNCR (153 aa)) is domain III. The 119-residue stretch at 499-617 (RLDEPPRTCW…HTLHLQDRSS (119 aa)) folds into the C2 domain.

The protein belongs to the peptidase C2 family.

Calcium-regulated non-lysosomal thiol-protease. This Mus musculus (Mouse) protein is Calpain-5 (Capn5).